Consider the following 78-residue polypeptide: LYR motif-containing protein 9 (78 aa).

It belongs to the complex I LYR family. LYRM9 subfamily.

The protein is LYR motif-containing protein 9 (Lyrm9) of Mus musculus (Mouse).